The primary structure comprises 28 residues: Alpha-(1-6)-linked fucose-specific lectin (28 aa).

In terms of assembly, homohexamer. In terms of tissue distribution, expressed by mycelium-forming spores.

It is found in the secreted. In terms of biological role, alpha-(1-6)-linked L-fucose specific lectin. This chain is Alpha-(1-6)-linked fucose-specific lectin, found in Rhizopus stolonifer (Rhizopus nigricans).